Consider the following 858-residue polypeptide: Respiratory burst oxidase homolog protein D (858 aa).

Positions 1 to 13 (MQNPEDHHSDREL) are enriched in basic and acidic residues. Residues 1 to 27 (MQNPEDHHSDRELSSPSNTTKSNDDKN) form a disordered region. Over 1 to 318 (MQNPEDHHSD…KYFLLDNWRR (318 aa)) the chain is Cytoplasmic. EF-hand-like stretches follow at residues 134 to 144 (TATSDSLLPRA) and 171 to 182 (RNITSGCISKEQ). EF-hand domains are found at residues 194–229 (SFDSRLRTFFDMVDKDADGRLTEEEVREIICLSASA) and 238–273 (QAAEYAALIMEELDRDQKGYIMLENLEMLLLEAPIQ). Positions 207, 209, 211, 213, and 218 each coordinate Ca(2+). The helical transmembrane segment at 319–339 (VWVLLLWIGVMAGLFAYKYVQ) threads the bilayer. Over 340-351 (YKNKAAFNVMGH) the chain is Extracellular. The chain crosses the membrane as a helical span at residues 352 to 372 (CVCVAKGAAEVLKLNMALILL). The 158-residue stretch at 357–514 (KGAAEVLKLN…LFVIVYSLLI (158 aa)) folds into the Ferric oxidoreductase domain. Over 373 to 397 (PVCRNTITWLRNKTKLGGAVPFDDN) the chain is Cytoplasmic. A helical membrane pass occupies residues 398 to 418 (INFHKVVAGAIAVGVGIHVLA). The Extracellular segment spans residues 419–454 (HMTCDFPRLLNASPEKYKPMEPYFGDQPRNYWHFVK). Residues 455–475 (GVEGVSGIIMVVLMSIAFTLA) form a helical membrane-spanning segment. At 476 to 497 (SQRFRRNKIRLPRPLNKLTGFN) the chain is on the cytoplasmic side. A helical membrane pass occupies residues 498–518 (AFWYSHHLFVIVYSLLIVHGI). At 519–675 (ELYLTKEWYK…APAQDYKEYE (157 aa)) the chain is on the extracellular side. An FAD-binding FR-type domain is found at 548 to 670 (LRAFRSSVKD…DGPYGAPAQD (123 aa)). Residues 676–696 (VLLLVGLGIGATPMISIVKDI) form a helical membrane-spanning segment. The Cytoplasmic portion of the chain corresponds to 697–858 (VNNMKEEKYD…TKFDFHKENF (162 aa)).

It belongs to the RBOH (TC 5.B.1.3) family. Monomer and homodimer. In terms of processing, phosphorylated by CPK. Expressed in leaves.

The protein localises to the membrane. In terms of biological role, calcium-dependent NADPH oxidase that generates superoxide. May be responsible for the oxidative burst in response to pathogen attack in the leaves. This chain is Respiratory burst oxidase homolog protein D (RBOHD), found in Solanum tuberosum (Potato).